Reading from the N-terminus, the 393-residue chain is Envelope glycoprotein D (393 aa).

The first 25 residues, Met1–Ala25, serve as a signal peptide directing secretion. Positions Ala25–Pro57 are interaction with TNFRSF14. Topologically, residues Lys26–Gly340 are virion surface. Position 64 (His64) interacts with Zn(2+). 3 disulfides stabilise this stretch: Cys91/Cys214, Cys131/Cys227, and Cys143/Cys152. Residues Asn119 and Asn146 are each glycosylated (N-linked (GlcNAc...) asparagine; by host). Asp240 lines the Zn(2+) pocket. The segment at Leu261 to Glu305 is profusion. Over residues Thr274–Gln290 the composition is skewed to polar residues. Residues Thr274–Ser301 form a disordered region. The N-linked (GlcNAc...) asparagine; by host glycan is linked to Asn287. Residues Leu341–Phe361 traverse the membrane as a helical segment. Topologically, residues Trp362–Tyr393 are intravirion.

The protein belongs to the herpesviridae glycoprotein D family. As to quaternary structure, homodimer. Interacts with host receptor TNFRSF14. Interacts with host receptor NECTIN1. Interacts with host receptor NECTIN2. Interacts (via profusion domain) with gB; this interaction occurs in the absence of gH/gL. Interacts (via profusion domain) with gH/gL heterodimer; this interaction occurs in the absence of gB. Associates with the gB-gH/gL-gD complex. Interacts (via C-terminus) with UL11 tegument protein.

The protein localises to the virion membrane. Envelope glycoprotein that binds to the host cell entry receptors NECTIN1 and TNFRSF14/HVEM, promoting the virus entry into host cells. May trigger fusion with host membrane, by recruiting the fusion machinery composed of gB and gH/gL. This is Envelope glycoprotein D (gD) from Human herpesvirus 2 (strain HG52) (HHV-2).